A 943-amino-acid chain; its full sequence is uncharacterized protein (943 aa).

An N-acetylmethionine modification is found at Met1. Disordered stretches follow at residues 37-63 (DETP…QQQQ), 152-177 (KHQF…DDEV), 315-381 (LPMN…QQLQ), 397-472 (QNVP…PLKK), and 515-546 (EREA…ESDD). Residues 41-58 (ISRNGNDSNINIQPSSVP) show a composition bias toward polar residues. The span at 152 to 162 (KHQFGKSKKNT) shows a compositional bias: basic residues. The span at 318-358 (NNYNNHPGQFQNTPPVMPSGQQPPQQPRTLSLTNGPRYSPQ) shows a compositional bias: polar residues. Low complexity predominate over residues 367-381 (QQISQRQQQQQQQLQ). Residues 397–409 (QNVPQGFNPWSPN) show a composition bias toward polar residues. Over residues 417–433 (SMKQPISQSSISSKNNS) the composition is skewed to low complexity. Polar residues predominate over residues 434–470 (AYSIPNVQNNSLTTFSPSSPTDATAMPNSTKQGSSPL). The span at 515 to 533 (EREALVEEKEKERAEKNTE) shows a compositional bias: basic and acidic residues. 3 positions are modified to phosphoserine: Ser553, Ser586, and Ser619. Residues 616–639 (EFPSPGKYNSNSDNGEMNTTNEVD) are disordered. Polar residues predominate over residues 622–639 (KYNSNSDNGEMNTTNEVD). Phosphoserine is present on Ser649. A disordered region spans residues 654–683 (IPERDPKRNVSDATIKRRESDGNGRRLSNV). Positions 655–677 (PERDPKRNVSDATIKRRESDGNG) are enriched in basic and acidic residues. A phosphoserine mark is found at Ser681, Ser766, and Ser771.

This is an uncharacterized protein from Saccharomyces cerevisiae (strain ATCC 204508 / S288c) (Baker's yeast).